A 133-amino-acid polypeptide reads, in one-letter code: Egg protein CP422 (133 aa).

The first 21 residues, 1–21, serve as a signal peptide directing secretion; that stretch reads MHECMIVFFIFAVVSIYYADA. 3 cysteine pairs are disulfide-bonded: Cys-107–Cys-121, Cys-114–Cys-125, and Cys-120–Cys-130.

The protein localises to the secreted. This is Egg protein CP422 (CP422) from Schistosoma japonicum (Blood fluke).